The chain runs to 282 residues: Undecaprenyl-diphosphatase (282 aa).

8 consecutive transmembrane segments (helical) span residues 7 to 29 (VLFA…HVVI), 45 to 65 (FLPF…LYFW), 89 to 109 (GLLL…FALK), 115 to 135 (LFAS…VLII), 153 to 173 (LTLR…LPGL), 196 to 216 (FAFL…VPHL), 229 to 249 (TALL…AFLM), and 258 to 278 (WALG…LILI).

This sequence belongs to the UppP family.

The protein resides in the cell inner membrane. The catalysed reaction is di-trans,octa-cis-undecaprenyl diphosphate + H2O = di-trans,octa-cis-undecaprenyl phosphate + phosphate + H(+). Catalyzes the dephosphorylation of undecaprenyl diphosphate (UPP). Confers resistance to bacitracin. The sequence is that of Undecaprenyl-diphosphatase from Acidiphilium cryptum (strain JF-5).